The primary structure comprises 425 residues: Putative chloroquine resistance transporter (425 aa).

The Cytoplasmic segment spans residues 1 to 56 (MTGIKKGKNKKKNMKNDDRYKELDSLITNGSEIGNNSGRSCVKRFFKIIGNEMKNN). The helical transmembrane segment at 57 to 77 (VYVYLLSILYLCVCVMNKVFA) threads the bilayer. The Vacuolar segment spans residues 78-88 (KRTLNKMGNYS). Asn-86 carries N-linked (GlcNAc...) asparagine glycosylation. A helical membrane pass occupies residues 89-109 (FVTSETHNIICIIVFQLLYFI). Topologically, residues 110–126 (YRKTSSSSVYKNESQKN) are cytoplasmic. Residues 127–147 (FGWQFFLISLLDASTVIISMI) form a helical membrane-spanning segment. Topologically, residues 148–157 (GLTRTTGNIQ) are vacuolar. Residues 158-178 (SFIMQLIIPVNMYFWFMFLGY) form a helical membrane-spanning segment. The Cytoplasmic segment spans residues 179 to 181 (RYH). Residues 182–202 (LFNYLGAFIILITIAVVETFL) traverse the membrane as a helical segment. At 203–210 (SFETQGEN) the chain is on the vacuolar side. The chain crosses the membrane as a helical span at residues 211 to 231 (SIIFNLIMISAFNTLSFSNMT). The Cytoplasmic portion of the chain corresponds to 232-249 (REVVFKKHKINILRLNAM). Residues 250-270 (VVLFQFFTSLLVLPVYNIPFL) form a helical membrane-spanning segment. Over 271–318 (KEIYMPFSEMSTNINNGLRCLFYGENTIVENCGVGMVKMCDNCEGAWK) the chain is Vacuolar. Cystine bridges form between Cys-290-Cys-313 and Cys-302-Cys-310. Residues 319 to 339 (TFITFSFFNICDNLLACYIID) form a helical membrane-spanning segment. Residues 340–347 (KFSTMTYT) lie on the Cytoplasmic side of the membrane. A helical transmembrane segment spans residues 348-368 (IVSCIQGPAITIAYYFKFLAG). At 369–378 (DAVRKPRILD) the chain is on the vacuolar side. Residues 379 to 399 (FLTLFGYLFGTIIYRIGNIIL) traverse the membrane as a helical segment. Topologically, residues 400–425 (EKKQVIKSQNSNDSEAELTSIETSRA) are cytoplasmic.

It belongs to the CRT-like transporter family.

The protein resides in the vacuole membrane. Nutrient transporter. Involved in maintaining the osmotic homeostasis of the digestive vacuole. In Plasmodium berghei, this protein is Putative chloroquine resistance transporter.